We begin with the raw amino-acid sequence, 388 residues long: Galactokinase (388 aa).

Glu-33–Asp-36 is a substrate binding site. ATP is bound by residues Ser-67 and Gly-124–Ser-130. Mg(2+) is bound by residues Ser-130 and Glu-162. Catalysis depends on Asp-174, which acts as the Proton acceptor. A substrate-binding site is contributed by Tyr-224.

This sequence belongs to the GHMP kinase family. GalK subfamily.

The protein resides in the cytoplasm. It catalyses the reaction alpha-D-galactose + ATP = alpha-D-galactose 1-phosphate + ADP + H(+). It functions in the pathway carbohydrate metabolism; galactose metabolism. Its function is as follows. Catalyzes the transfer of the gamma-phosphate of ATP to D-galactose to form alpha-D-galactose-1-phosphate (Gal-1-P). This is Galactokinase from Streptococcus thermophilus.